The primary structure comprises 365 residues: Mannonate dehydratase 1 (365 aa).

The protein belongs to the mannonate dehydratase family. It depends on Fe(2+) as a cofactor. The cofactor is Mn(2+).

It catalyses the reaction D-mannonate = 2-dehydro-3-deoxy-D-gluconate + H2O. It functions in the pathway carbohydrate metabolism; pentose and glucuronate interconversion. Its function is as follows. Catalyzes the dehydration of D-mannonate. This is Mannonate dehydratase 1 from Bacillus licheniformis (strain ATCC 14580 / DSM 13 / JCM 2505 / CCUG 7422 / NBRC 12200 / NCIMB 9375 / NCTC 10341 / NRRL NRS-1264 / Gibson 46).